A 330-amino-acid chain; its full sequence is Tyrosine-protein phosphatase yvh1 (330 aa).

The Tyrosine-protein phosphatase domain occupies 45-187 (NDLSEISKNL…LRVYFECNYQ (143 aa)). Cys131 serves as the catalytic Phosphocysteine intermediate.

The protein belongs to the protein-tyrosine phosphatase family. Non-receptor class dual specificity subfamily.

Its subcellular location is the cytoplasm. The protein localises to the nucleus. It carries out the reaction O-phospho-L-tyrosyl-[protein] + H2O = L-tyrosyl-[protein] + phosphate. In terms of biological role, may be directly involved in signal transduction and/or cell cycle regulation. It is necessary for maintaining growth rate or spore germination. Could show both activity toward tyrosine-protein phosphate as well as with serine-protein phosphate. In Schizosaccharomyces pombe (strain 972 / ATCC 24843) (Fission yeast), this protein is Tyrosine-protein phosphatase yvh1 (yvh1).